The primary structure comprises 196 residues: Molybdenum cofactor guanylyltransferase (196 aa).

GTP is bound by residues 10-12 (LAG), lysine 23, asparagine 51, aspartate 69, and aspartate 99. Mg(2+) is bound at residue aspartate 99.

This sequence belongs to the MobA family. In terms of assembly, monomer. Mg(2+) is required as a cofactor.

The protein resides in the cytoplasm. It carries out the reaction Mo-molybdopterin + GTP + H(+) = Mo-molybdopterin guanine dinucleotide + diphosphate. Its function is as follows. Transfers a GMP moiety from GTP to Mo-molybdopterin (Mo-MPT) cofactor (Moco or molybdenum cofactor) to form Mo-molybdopterin guanine dinucleotide (Mo-MGD) cofactor. The polypeptide is Molybdenum cofactor guanylyltransferase (Shewanella woodyi (strain ATCC 51908 / MS32)).